The chain runs to 539 residues: Phospho-2-dehydro-3-deoxyheptonate aldolase 2, chloroplastic (539 aa).

Disordered stretches follow at residues 1-23 (MALA…SAPQ) and 41-70 (VHAA…APEK). The transit peptide at 1-54 (MALATNSAAVSGGAAAAASSAPQPRLAATFLPMRRRTVSAVHAADPAKSNGPVQ) directs the protein to the chloroplast. A compositionally biased stretch (low complexity) spans 7–21 (SAAVSGGAAAAASSA).

The protein belongs to the class-II DAHP synthase family.

The protein resides in the plastid. Its subcellular location is the chloroplast. The catalysed reaction is D-erythrose 4-phosphate + phosphoenolpyruvate + H2O = 7-phospho-2-dehydro-3-deoxy-D-arabino-heptonate + phosphate. It participates in metabolic intermediate biosynthesis; chorismate biosynthesis; chorismate from D-erythrose 4-phosphate and phosphoenolpyruvate: step 1/7. The sequence is that of Phospho-2-dehydro-3-deoxyheptonate aldolase 2, chloroplastic (DAHPS2) from Oryza sativa subsp. japonica (Rice).